We begin with the raw amino-acid sequence, 435 residues long: Glutamyl-tRNA reductase (435 aa).

Substrate-binding positions include 50–53, Ser110, 115–117, and Gln121; these read TCNR and ESQ. Residue Cys51 is the Nucleophile of the active site. 191–196 is an NADP(+) binding site; the sequence is GAGDMG.

Belongs to the glutamyl-tRNA reductase family. As to quaternary structure, homodimer.

The enzyme catalyses (S)-4-amino-5-oxopentanoate + tRNA(Glu) + NADP(+) = L-glutamyl-tRNA(Glu) + NADPH + H(+). It functions in the pathway porphyrin-containing compound metabolism; protoporphyrin-IX biosynthesis; 5-aminolevulinate from L-glutamyl-tRNA(Glu): step 1/2. Its function is as follows. Catalyzes the NADPH-dependent reduction of glutamyl-tRNA(Glu) to glutamate 1-semialdehyde (GSA). The polypeptide is Glutamyl-tRNA reductase (Sulfurovum sp. (strain NBC37-1)).